Consider the following 579-residue polypeptide: Insulin-like growth factor 2 mRNA-binding protein 3 (579 aa).

RRM domains lie at 2-75 (NKLY…HSVP) and 81-156 (RKLQ…YIPD). The segment at 158–192 (TAAQQNPSPQLRGRRGPGQRGSSRQASPGSVSKQK) is disordered. S165 is subject to Phosphoserine. At S184 the chain carries Phosphoserine; by MTOR. KH domains are found at residues 195–260 (DLPL…CKSI), 276–343 (EIPL…EEEI), and 405–470 (TETV…QGRI). Glycyl lysine isopeptide (Lys-Gly) (interchain with G-Cter in SUMO2) cross-links involve residues K450 and K475. The KH 4 domain maps to 487-553 (KLEAHIRVPS…YACQVAQRKI (67 aa)). Residue T528 is modified to Phosphothreonine.

This sequence belongs to the RRM IMP/VICKZ family. In terms of assembly, can form homooligomers and heterooligomers with IGF2BP1 and IGF2BP3 in an RNA-dependent manner. Interacts with IGF2BP1. Interacts with ELAVL1, DHX9, HNRNPU, MATR3 and PABPC1. As to expression, expressed in oocytes, spermatogonia and spermatocytes (at protein level).

The protein localises to the nucleus. It localises to the cytoplasm. The protein resides in the P-body. It is found in the stress granule. Functionally, RNA-binding factor that may recruit target transcripts to cytoplasmic protein-RNA complexes (mRNPs). This transcript 'caging' into mRNPs allows mRNA transport and transient storage. It also modulates the rate and location at which target transcripts encounter the translational apparatus and shields them from endonuclease attacks or microRNA-mediated degradation. Preferentially binds to N6-methyladenosine (m6A)-containing mRNAs and increases their stability. Binds to the 3'-UTR of CD44 mRNA and stabilizes it, hence promotes cell adhesion and invadopodia formation. Binds to beta-actin/ACTB and MYC transcripts. Increases MYC mRNA stability by binding to the coding region instability determinant (CRD) and binding is enhanced by m6A-modification of the CRD. Binds to the 5'-UTR of the insulin-like growth factor 2 (IGF2) mRNAs. The polypeptide is Insulin-like growth factor 2 mRNA-binding protein 3 (Igf2bp3) (Mus musculus (Mouse)).